Here is a 54-residue protein sequence, read N- to C-terminus: Ovomucoid (54 aa).

The region spanning 4–54 (VDCSDYPKPVCPLDYMPLCGSDSKTYSNKCNFCNAVVESSGTLTLRHFGKC) is the Kazal-like domain. Intrachain disulfides connect Cys-6-Cys-36, Cys-14-Cys-33, and Cys-22-Cys-54.

In terms of processing, this is the only ovomucoid third domain known to be not glycosylated.

It is found in the secreted. This chain is Ovomucoid, found in Struthio camelus (Common ostrich).